A 507-amino-acid chain; its full sequence is Cytochrome P450 7B1 (507 aa).

3 helical membrane passes run 14–34, 178–198, and 287–307; these read PLAL…LFLL, IFAF…YGKI, and FLWA…YYIL. Cys447 is a heme binding site.

This sequence belongs to the cytochrome P450 family. Requires heme as cofactor. Highly expressed in brain structures including the corpus callosum, the anterior commissure and fornix. The hippocampal expression is particularly prominent in the dentate gyrus. Expressed in liver and kidney. The hepatic expression is sexually dimorphic, predominantly detected in male liver while barely detectable in females. Expressed in lymph nodes and spleens, in both lymphoid and stromal compartments. Higher expression is detected in fibroblastic reticular cells, a type of stromal cells in the lymph nodes. Also expressed at high levels in the outer follicle and at the B cell-T cell boundary of splenic germinal centers. Expressed in dendritic cells (DCs) subpopulations being most abundant in CD8-positive DCs.

The protein resides in the endoplasmic reticulum membrane. It localises to the microsome membrane. It catalyses the reaction 25-hydroxycholesterol + reduced [NADPH--hemoprotein reductase] + O2 = 7alpha,25-dihydroxycholesterol + oxidized [NADPH--hemoprotein reductase] + H2O + H(+). It carries out the reaction (25R)-cholest-5-ene-3beta,26-diol + reduced [NADPH--hemoprotein reductase] + O2 = (25R)-cholest-5-en-3beta,7alpha,26-triol + oxidized [NADPH--hemoprotein reductase] + H2O + H(+). The enzyme catalyses (24S)-hydroxycholesterol + reduced [NADPH--hemoprotein reductase] + O2 = (24S)-7alpha-dihydroxycholesterol + oxidized [NADPH--hemoprotein reductase] + H2O + H(+). The catalysed reaction is (24S)-25-epoxycholesterol + reduced [NADPH--hemoprotein reductase] + O2 = (24S,25)-epoxy-7alpha-hydroxycholesterol + oxidized [NADPH--hemoprotein reductase] + H2O + H(+). It catalyses the reaction (22R)-hydroxycholesterol + reduced [NADPH--hemoprotein reductase] + O2 = (22R,7alpha)-dihydroxycholesterol + oxidized [NADPH--hemoprotein reductase] + H2O + H(+). It carries out the reaction androst-5-en-3beta,17beta-diol + reduced [NADPH--hemoprotein reductase] + O2 = androst-5-en-3beta,7alpha,17beta-triol + oxidized [NADPH--hemoprotein reductase] + H2O + H(+). The enzyme catalyses 5alpha-androstane-3beta,17beta-diol + reduced [NADPH--hemoprotein reductase] + O2 = 5alpha-androstane-3beta,6alpha,17beta-triol + oxidized [NADPH--hemoprotein reductase] + H2O + H(+). The catalysed reaction is 3beta-hydroxyandrost-5-en-17-one + reduced [NADPH--hemoprotein reductase] + O2 = 3beta,7alpha-dihydroxyandrost-5-en-17-one + oxidized [NADPH--hemoprotein reductase] + H2O + H(+). It catalyses the reaction 3beta-hydroxy-5alpha-androstan-17-one + reduced [NADPH--hemoprotein reductase] + O2 = 3beta,7alpha-dihydroxy-5alpha-androstan-17-one + oxidized [NADPH--hemoprotein reductase] + H2O + H(+). It carries out the reaction pregnenolone + reduced [NADPH--hemoprotein reductase] + O2 = 7alpha-hydroxypregnenolone + oxidized [NADPH--hemoprotein reductase] + H2O + H(+). Its pathway is lipid metabolism; bile acid biosynthesis. The protein operates within steroid hormone biosynthesis. With respect to regulation, inhibited by drugs voriconazole and metyrapone. Its function is as follows. A cytochrome P450 monooxygenase involved in the metabolism of endogenous oxysterols and steroid hormones, including neurosteroids. Mechanistically, uses molecular oxygen inserting one oxygen atom into a substrate, and reducing the second into a water molecule, with two electrons provided by NADPH via cytochrome P450 reductase (CPR; NADPH-ferrihemoprotein reductase). Catalyzes the hydroxylation of carbon hydrogen bonds of steroids with a preference for 7-alpha position. Usually metabolizes steroids carrying a hydroxy group at position 3, functioning as a 3-hydroxy steroid 7-alpha hydroxylase. Hydroxylates oxysterols, including 25-hydroxycholesterol and (25R)-cholest-5-ene-3beta,26-diol toward 7-alpha hydroxy derivatives, which may be transported to the liver and converted to bile acids. Via its product 7-alpha,25-dihydroxycholesterol, a ligand for the chemotactic G protein-coupled receptor GPR183/EBI2, regulates B cell migration in germinal centers of lymphoid organs, thus guiding efficient maturation of plasma B cells and overall antigen-specific humoral immune response. 7-alpha hydroxylates neurosteroids, including 3beta-hydroxyandrost-5-en-17-one (dehydroepiandrosterone) and pregnenolone, both involved in hippocampus-associated memory and learning. Metabolizes androstanoids toward 6- or 7-alpha hydroxy derivatives. The chain is Cytochrome P450 7B1 from Mus musculus (Mouse).